Here is a 305-residue protein sequence, read N- to C-terminus: NAD kinase (305 aa).

The active-site Proton acceptor is Asp82. NAD(+) contacts are provided by residues 82–83 (DG), 156–157 (ND), Arg184, Asp186, 197–202 (TAYALS), Ala221, and Gln255.

This sequence belongs to the NAD kinase family. The cofactor is a divalent metal cation.

The protein localises to the cytoplasm. It carries out the reaction NAD(+) + ATP = ADP + NADP(+) + H(+). In terms of biological role, involved in the regulation of the intracellular balance of NAD and NADP, and is a key enzyme in the biosynthesis of NADP. Catalyzes specifically the phosphorylation on 2'-hydroxyl of the adenosine moiety of NAD to yield NADP. The protein is NAD kinase of Cupriavidus pinatubonensis (strain JMP 134 / LMG 1197) (Cupriavidus necator (strain JMP 134)).